The sequence spans 86 residues: Putative membrane protein insertion efficiency factor (86 aa).

The disordered stretch occupies residues 67-86 (LHEGGDDPVPPVKNNDNREH).

It belongs to the UPF0161 family.

It localises to the cell inner membrane. Could be involved in insertion of integral membrane proteins into the membrane. In Photorhabdus laumondii subsp. laumondii (strain DSM 15139 / CIP 105565 / TT01) (Photorhabdus luminescens subsp. laumondii), this protein is Putative membrane protein insertion efficiency factor.